We begin with the raw amino-acid sequence, 355 residues long: Ribosomal RNA large subunit methyltransferase M (355 aa).

S-adenosyl-L-methionine is bound by residues S191, 224–227 (APGG), D243, D263, and D279. The Proton acceptor role is filled by K308.

This sequence belongs to the class I-like SAM-binding methyltransferase superfamily. RNA methyltransferase RlmE family. RlmM subfamily. In terms of assembly, monomer.

The protein resides in the cytoplasm. The enzyme catalyses cytidine(2498) in 23S rRNA + S-adenosyl-L-methionine = 2'-O-methylcytidine(2498) in 23S rRNA + S-adenosyl-L-homocysteine + H(+). In terms of biological role, catalyzes the 2'-O-methylation at nucleotide C2498 in 23S rRNA. The protein is Ribosomal RNA large subunit methyltransferase M of Stenotrophomonas maltophilia (strain R551-3).